The chain runs to 386 residues: Succinate--CoA ligase [ADP-forming] subunit beta (386 aa).

Positions 46, 99, 102, and 107 each coordinate ATP. Residues asparagine 199 and aspartate 213 each coordinate Mg(2+). Substrate-binding positions include asparagine 264 and 321-323 (GIM).

Belongs to the succinate/malate CoA ligase beta subunit family. As to quaternary structure, heterotetramer of two alpha and two beta subunits. Mg(2+) is required as a cofactor.

It catalyses the reaction succinate + ATP + CoA = succinyl-CoA + ADP + phosphate. The enzyme catalyses GTP + succinate + CoA = succinyl-CoA + GDP + phosphate. Its pathway is carbohydrate metabolism; tricarboxylic acid cycle; succinate from succinyl-CoA (ligase route): step 1/1. Succinyl-CoA synthetase functions in the citric acid cycle (TCA), coupling the hydrolysis of succinyl-CoA to the synthesis of either ATP or GTP and thus represents the only step of substrate-level phosphorylation in the TCA. The beta subunit provides nucleotide specificity of the enzyme and binds the substrate succinate, while the binding sites for coenzyme A and phosphate are found in the alpha subunit. The chain is Succinate--CoA ligase [ADP-forming] subunit beta from Orientia tsutsugamushi (strain Ikeda) (Rickettsia tsutsugamushi).